A 444-amino-acid polypeptide reads, in one-letter code: UDP-N-acetylmuramate--L-alanine ligase (444 aa).

111–117 is a binding site for ATP; that stretch reads GAHGKTS.

The protein belongs to the MurCDEF family.

Its subcellular location is the cytoplasm. The catalysed reaction is UDP-N-acetyl-alpha-D-muramate + L-alanine + ATP = UDP-N-acetyl-alpha-D-muramoyl-L-alanine + ADP + phosphate + H(+). Its pathway is cell wall biogenesis; peptidoglycan biosynthesis. In terms of biological role, cell wall formation. The polypeptide is UDP-N-acetylmuramate--L-alanine ligase (Leuconostoc citreum (strain KM20)).